The sequence spans 404 residues: S-adenosylmethionine synthase (404 aa).

Histidine 17 contributes to the ATP binding site. Aspartate 19 serves as a coordination point for Mg(2+). Residue glutamate 45 coordinates K(+). The L-methionine site is built by glutamate 58 and glutamine 101. The tract at residues 101–111 is flexible loop; that stretch reads QSPDIAMGVDQ. Residues 177 to 179, 244 to 245, aspartate 253, 259 to 260, alanine 276, and lysine 280 contribute to the ATP site; these read DGK, RF, and RK. Position 253 (aspartate 253) interacts with L-methionine. L-methionine is bound at residue lysine 284.

This sequence belongs to the AdoMet synthase family. As to quaternary structure, homotetramer; dimer of dimers. Mg(2+) serves as cofactor. It depends on K(+) as a cofactor.

It localises to the cytoplasm. The enzyme catalyses L-methionine + ATP + H2O = S-adenosyl-L-methionine + phosphate + diphosphate. Its pathway is amino-acid biosynthesis; S-adenosyl-L-methionine biosynthesis; S-adenosyl-L-methionine from L-methionine: step 1/1. In terms of biological role, catalyzes the formation of S-adenosylmethionine (AdoMet) from methionine and ATP. The overall synthetic reaction is composed of two sequential steps, AdoMet formation and the subsequent tripolyphosphate hydrolysis which occurs prior to release of AdoMet from the enzyme. This is S-adenosylmethionine synthase from Geobacillus thermodenitrificans (strain NG80-2).